Reading from the N-terminus, the 788-residue chain is MVLLRLLVFLFAPVVSDLCSLPCFINVSESQGPGTVLQFLSFNCSSYTPTPTLELLNVQPPTTFFNPPSLARWQGTYVGKLTLSSSAQLDALMVNHYKVQLKFTCGNHVMEGSLSVDVQRDLSHIQCAGQFASPAGEMIQVPETVTPGARLYTLLLPGLELHGAQMSIISAQDLPHFPGPFSINEQGWLQAPSQGLLGQAQKVFQLQISVSFGQRQSCQGMVIVKVLPVPSSQVSFLEQAQNITIPENLAPGSEVVQVQARGVDLRYEILSPVPSPLFSIGRADGVVRTTTPLELARTSGTAVSRLQVKAFEQGQLWASAKLNLTMNVQLVNLWPPRCLPALLVSQIPETAPVGTVLNTLTCEDPDSVGATLDYKLWFRSSSNPASLCLYDRVLEVNATLDCDTPGACFQHAASILVLDGGQPQMTTEVPVLVMVTPINEFSPACAPRTFRVQEDAAPHTLLGSVVGTDMDYPHDNIEYYTSGGPTTFAVDRLSGEVHLLGPLDYEQQRLYRLTVLVIDHGQDQNPNHHLSGSCTITIEVEDVNDHAPECEPPFQELTIYAPLGRSVEVTKMSCQIPQEPQRLIYSYSIVGGNSQNRFILQGAILVHSDLVLGPFWPEQPRTYELLICVADAGPSTPHLSTTATIIVHLVPRRASTVATSTHRTTVPSTMTPMLVTDTEAFWQPQPWFVVVLTATGALLLLALGWLLGRLLQGLAQLLQAPSKPAQALLLNSIQGTEGSIEGFLEAPKMEMSQAPSSVMSLHFDGRAQDSRTGRDYLFNTHTGARRWL.

The first 16 residues, 1-16 (MVLLRLLVFLFAPVVS), serve as a signal peptide directing secretion. At 17–686 (DLCSLPCFIN…DTEAFWQPQP (670 aa)) the chain is on the extracellular side. 4 Cadherin domains span residues 237-338 (LEQA…PPRC), 339-449 (LPAL…APRT), 444-554 (ACAP…EPPF), and 551-674 (EPPF…TPML). The N-linked (GlcNAc...) asparagine glycan is linked to Asn-242. Residues 687-707 (WFVVVLTATGALLLLALGWLL) form a helical membrane-spanning segment. At 708 to 788 (GRLLQGLAQL…NTHTGARRWL (81 aa)) the chain is on the cytoplasmic side.

It is found in the membrane. Functionally, cadherins are calcium-dependent cell adhesion proteins. They preferentially interact with themselves in a homophilic manner in connecting cells; cadherins may thus contribute to the sorting of heterogeneous cell types. The polypeptide is Cadherin-related family member 4 (CDHR4) (Homo sapiens (Human)).